Consider the following 104-residue polypeptide: 2,4-dinitrotoluene dioxygenase system, ferredoxin component (104 aa).

Residues 1–21 (MSENWIDAAARDEVPRGRRDR) are disordered. The 97-residue stretch at 5–101 (WIDAAARDEV…VKIENMRVML (97 aa)) folds into the Rieske domain. Cys-45, His-47, Cys-64, and His-67 together coordinate [2Fe-2S] cluster.

Belongs to the bacterial ring-hydroxylating dioxygenase ferredoxin component family. As to quaternary structure, the 2,4-dinitrotoluene dioxygenase (DNTDO) multicomponent enzyme system is composed of an electron transfer component and a dioxygenase component (iron sulfur protein (ISP)). The electron transfer component is composed of a ferredoxin reductase (DntAa) and a ferredoxin (DntAb), and the dioxygenase component is formed of a large alpha subunit (DntAc) and a small beta subunit (DntAd). [2Fe-2S] cluster is required as a cofactor.

Functionally, component of the 2,4-dinitrotoluene dioxygenase (DNTDO) multicomponent enzyme system which catalyzes the incorporation of both atoms of molecular oxygen into 2,4-dinitrotoluene (DNT) to form 4-methyl-5-nitrocatechol (MNC) and nitrite. Functions as an intermediate electron transfer protein via a specific interaction with iron sulfur protein components (ISP)(DntAc and DntAd). Also able to convert naphthalene to cis-(1R,2S)-dihydroxy-1,2-dihydronaphthalene. In Burkholderia sp. (strain RASC), this protein is 2,4-dinitrotoluene dioxygenase system, ferredoxin component.